An 88-amino-acid polypeptide reads, in one-letter code: Small ribosomal subunit protein uS15 (88 aa).

The protein belongs to the universal ribosomal protein uS15 family. Part of the 30S ribosomal subunit. Forms a bridge to the 50S subunit in the 70S ribosome, contacting the 23S rRNA.

Its function is as follows. One of the primary rRNA binding proteins, it binds directly to 16S rRNA where it helps nucleate assembly of the platform of the 30S subunit by binding and bridging several RNA helices of the 16S rRNA. Functionally, forms an intersubunit bridge (bridge B4) with the 23S rRNA of the 50S subunit in the ribosome. This chain is Small ribosomal subunit protein uS15, found in Geobacter metallireducens (strain ATCC 53774 / DSM 7210 / GS-15).